The sequence spans 980 residues: Zinc finger BED domain-containing protein 6 (980 aa).

Residues 1–89 (MSVCTLSVPV…ILAKKFSKDL (89 aa)) form a required for nucleolar localization region. Residues 89-109 (LGSGRPVADAPASLASGAPEQ) form a disordered region. The BED-type 1 zinc-finger motif lies at 130–187 (AKTSIVWHFFHVDPQYTWRAICNLCEKSVSRGKPGSHLGTSTLQRHLQARHSPHWTRA). Positions 151, 154, 175, and 180 each coordinate Zn(2+). The segment at 201 to 239 (LDLSLSPPSPGSNGSFEYIPTDSVDENRMGKKRDKSASD) is disordered. The segment covering 203–215 (LSLSPPSPGSNGS) has biased composition (low complexity). The BED-type 2 zinc-finger motif lies at 265 to 322 (AKTSAVWNFFYTDPQHISRAVCNICKRSVSRGRPGSHLGTSTLQRHLQATHPIHWAVA). Residues Cys-286, Cys-289, His-310, and His-315 each contribute to the Zn(2+) site. The disordered stretch occupies residues 328–397 (AIGNGLDETE…ADQDNPVHAQ (70 aa)). Positions 360–373 (TAEDLSDSDTDEPP) are enriched in acidic residues. Residue Ser-383 is modified to Phosphoserine. An HATC (Hobo-Ac-Tam3) domain region spans residues 868-950 (VVDEYFKEKY…EQLIFLKMNL (83 aa)).

As to expression, expressed in pancreatic islet cells and weakly expressed in surrounding exocrine tissues (at protein level). Expressed in muscle and brain (at protein level). Shows broad tissue distribution with expression detected in brain, stomach, intestine, heart, kidney, liver, lung, skeletal muscle, ovary, spleen, tail and testis.

The protein localises to the nucleus. The protein resides in the nucleolus. Its subcellular location is the cytoplasm. Transcriptional repressor which binds to the consensus sequence 5'-GCTCGC-3', transcription regulation may be tissue-specific. Regulates the expression of target genes such as: IGF2, PGAP6/TMEM8, ENHO, and PIANP. Acts as a transcriptional repressor of growth factor IGF2, thereby negatively regulating postnatal growth of muscles and internal organs, especially in females. Negatively regulates myoblast differentiation and myoblast mitochondrial activity via its regulation of IGF2 transcription. Negatively regulates the cell cycle of myoblasts, potentially via transcriptional regulation of the E2F family of transcription factors such as: E2F1 and E2F2. Positively regulates the cell cycle and survival of pancreatic beta cells. Binds to the CDH2 gene and may directly repress CDH2 transcription. Probably by controlling CDH2 expression, regulates pancreatic beta cell adhesion, and formation of cell-to-cell junctions between pancreatic beta cells and neural crest stem cells. May also play a role in embryonic beta cell differentiation. May play a role in insulin sensitivity and glucose clearance. This Mus musculus (Mouse) protein is Zinc finger BED domain-containing protein 6.